The following is a 63-amino-acid chain: Large ribosomal subunit protein bL28 (63 aa).

It belongs to the bacterial ribosomal protein bL28 family.

The polypeptide is Large ribosomal subunit protein bL28 (Acidobacterium capsulatum (strain ATCC 51196 / DSM 11244 / BCRC 80197 / JCM 7670 / NBRC 15755 / NCIMB 13165 / 161)).